A 1056-amino-acid polypeptide reads, in one-letter code: Carbamoyl phosphate synthase large chain (1056 aa).

The carboxyphosphate synthetic domain stretch occupies residues 1 to 399 (MKIDVSKVIV…AFQKAIRMLD (399 aa)). ATP-binding residues include arginine 127, arginine 167, glycine 173, glycine 174, lysine 206, leucine 208, glutamate 213, glycine 239, valine 240, histidine 241, glutamine 282, and glutamate 296. Positions 131–325 (QKTMKKVGLP…LAYIATKLAI (195 aa)) constitute an ATP-grasp 1 domain. Glutamine 282, glutamate 296, and asparagine 298 together coordinate Mg(2+). Residues glutamine 282, glutamate 296, and asparagine 298 each contribute to the Mn(2+) site. Positions 400–536 (IGDELIGKYY…VTYDGVENDI (137 aa)) are oligomerization domain. The segment at 537–919 (PKPKKPSILV…LKSWLSVKPN (383 aa)) is carbamoyl phosphate synthetic domain. An ATP-grasp 2 domain is found at 661–849 (SKLLEKLGIP…LMELSAQAVL (189 aa)). Residues arginine 697, lysine 736, isoleucine 738, glutamate 742, glycine 766, valine 767, histidine 768, serine 769, glutamine 809, and glutamate 820 each coordinate ATP. Positions 809, 820, and 822 each coordinate Mg(2+). Mn(2+) is bound by residues glutamine 809, glutamate 820, and asparagine 822. The MGS-like domain occupies 915–1043 (SVKPNELPKT…REYWIRKIEE (129 aa)). An allosteric domain region spans residues 920-1056 (ELPKTSALIY…EYAASVVLRR (137 aa)).

Belongs to the CarB family. Composed of two chains; the small (or glutamine) chain promotes the hydrolysis of glutamine to ammonia, which is used by the large (or ammonia) chain to synthesize carbamoyl phosphate. Tetramer of heterodimers (alpha,beta)4. It depends on Mg(2+) as a cofactor. Requires Mn(2+) as cofactor.

The enzyme catalyses hydrogencarbonate + L-glutamine + 2 ATP + H2O = carbamoyl phosphate + L-glutamate + 2 ADP + phosphate + 2 H(+). It carries out the reaction hydrogencarbonate + NH4(+) + 2 ATP = carbamoyl phosphate + 2 ADP + phosphate + 2 H(+). It participates in amino-acid biosynthesis; L-arginine biosynthesis; carbamoyl phosphate from bicarbonate: step 1/1. It functions in the pathway pyrimidine metabolism; UMP biosynthesis via de novo pathway; (S)-dihydroorotate from bicarbonate: step 1/3. Functionally, large subunit of the glutamine-dependent carbamoyl phosphate synthetase (CPSase). CPSase catalyzes the formation of carbamoyl phosphate from the ammonia moiety of glutamine, carbonate, and phosphate donated by ATP, constituting the first step of 2 biosynthetic pathways, one leading to arginine and/or urea and the other to pyrimidine nucleotides. The large subunit (synthetase) binds the substrates ammonia (free or transferred from glutamine from the small subunit), hydrogencarbonate and ATP and carries out an ATP-coupled ligase reaction, activating hydrogencarbonate by forming carboxy phosphate which reacts with ammonia to form carbamoyl phosphate. In Pyrococcus furiosus (strain ATCC 43587 / DSM 3638 / JCM 8422 / Vc1), this protein is Carbamoyl phosphate synthase large chain.